Consider the following 205-residue polypeptide: Ras-related protein Rab-1A (205 aa).

Residues 18-26, 36-43, 66-70, 124-127, and 154-156 contribute to the GTP site; these read GDSGVGKSC, YTESYIST, DTAGQ, NKSD, and SAK. The Effector region motif lies at 40 to 48; sequence YISTIGVDF. Residues 183–198 are compositionally biased toward polar residues; the sequence is SDSKPSVKINSSTPVS. The disordered stretch occupies residues 183–205; that stretch reads SDSKPSVKINSSTPVSANKGGCC. S-geranylgeranyl cysteine attachment occurs at residues Cys204 and Cys205.

Belongs to the small GTPase superfamily. Rab family.

It localises to the golgi apparatus. The protein resides in the endoplasmic reticulum. Probably required for transit of protein from the ER through Golgi compartment. This chain is Ras-related protein Rab-1A (RAB1A), found in Lymnaea stagnalis (Great pond snail).